The chain runs to 121 residues: Large ribosomal subunit protein uL22 (121 aa).

This sequence belongs to the universal ribosomal protein uL22 family. Part of the 50S ribosomal subunit.

Functionally, this protein binds specifically to 23S rRNA; its binding is stimulated by other ribosomal proteins, e.g. L4, L17, and L20. It is important during the early stages of 50S assembly. It makes multiple contacts with different domains of the 23S rRNA in the assembled 50S subunit and ribosome. Its function is as follows. The globular domain of the protein is located near the polypeptide exit tunnel on the outside of the subunit, while an extended beta-hairpin is found that lines the wall of the exit tunnel in the center of the 70S ribosome. In Paenarthrobacter aurescens (strain TC1), this protein is Large ribosomal subunit protein uL22.